A 605-amino-acid chain; its full sequence is Adenine deaminase (605 aa).

It belongs to the metallo-dependent hydrolases superfamily. Adenine deaminase family. The cofactor is Mn(2+).

It carries out the reaction adenine + H2O + H(+) = hypoxanthine + NH4(+). The chain is Adenine deaminase from Mesorhizobium japonicum (strain LMG 29417 / CECT 9101 / MAFF 303099) (Mesorhizobium loti (strain MAFF 303099)).